Consider the following 184-residue polypeptide: DOMON domain-containing protein CBG21755 (184 aa).

The signal sequence occupies residues 1–20; sequence MIVPISLLFLFLSFVPFSYS. A DOMON domain is found at 28–145; the sequence is EVASMSWMVK…CVNWIVVPGG (118 aa). N-linked (GlcNAc...) asparagine glycosylation occurs at asparagine 49.

It is found in the secreted. This chain is DOMON domain-containing protein CBG21755, found in Caenorhabditis briggsae.